A 228-amino-acid polypeptide reads, in one-letter code: uncharacterized protein (228 aa).

The next 5 membrane-spanning stretches (helical) occupy residues 14–34 (HTIS…MLLV), 42–62 (VALF…AITL), 130–150 (FIFS…LVGS), 156–176 (FSFD…VLFM), and 192–212 (IVIA…LIAL).

Belongs to the AzlC family.

The protein localises to the cell membrane. This is an uncharacterized protein from Helicobacter pylori (strain ATCC 700392 / 26695) (Campylobacter pylori).